The chain runs to 319 residues: F-box only protein 8 (319 aa).

The region spanning 68 to 111 (FINLEMLPPELSFTILSYLNATDLCLASCVWQDLANDELLWQGL) is the F-box domain. In terms of domain architecture, SEC7 spans 146-276 (FNANPDEGVN…LILLSIDLTS (131 aa)).

May promote guanine-nucleotide exchange on an ARF. Promotes the activation of ARF through replacement of GDP with GTP (Potential). The sequence is that of F-box only protein 8 (FBXO8) from Bos taurus (Bovine).